We begin with the raw amino-acid sequence, 249 residues long: Transmembrane protein 150C (249 aa).

Residues 1–9 (MDGKKCSVW) are Cytoplasmic-facing. A helical transmembrane segment spans residues 10 to 30 (MFLPLVFTLFTSAGLWIVYFI). At 31 to 64 (AVEDDKILPLNSAARKSGVKHAPYISFAGDDPPA) the chain is on the extracellular side. The helical transmembrane segment at 65-85 (SCVFSQVMNMAAFLALVVAVL) threads the bilayer. The Cytoplasmic portion of the chain corresponds to 86–97 (RFIQLKPKVLNP). A helical membrane pass occupies residues 98–118 (WLNISGLVALCLASFGMTLLG). At 119–130 (NFQLTNDEEIHN) the chain is on the extracellular side. A helical membrane pass occupies residues 131–151 (VGTSLTFGFGTLTCWIQAALT). Residues 152 to 168 (LKVNIKNEGRRAGIPRV) lie on the Cytoplasmic side of the membrane. Residues 169–189 (ILSAVITLCVVLYFILMAQDI) form a helical membrane-spanning segment. Residues 190-192 (HMY) are Extracellular-facing. Residues 193 to 213 (AARVQWGLVMCFLAYFGTLAV) traverse the membrane as a helical segment. Residues 214-249 (EFRHYRYEIVCSEYQENFLSFSESLSEASEYQTDQV) lie on the Cytoplasmic side of the membrane.

The protein belongs to the DRAM/TMEM150 family.

The protein localises to the cell membrane. It localises to the lysosome membrane. It carries out the reaction Ca(2+)(in) = Ca(2+)(out). It catalyses the reaction Na(+)(in) = Na(+)(out). The enzyme catalyses K(+)(in) = K(+)(out). The catalysed reaction is Mg(2+)(in) = Mg(2+)(out). Its function is as follows. Nonselective cationic channel with high permeability to Ca(2+). Component of a mechanosensitive cation channel. Confers mechanically activated (MA) currents with slow inactivation kinetics. May contribute to proprioception. This chain is Transmembrane protein 150C (Tmem150c), found in Rattus norvegicus (Rat).